The sequence spans 296 residues: 4-hydroxybenzoate octaprenyltransferase (296 aa).

The next 8 membrane-spanning stretches (helical) occupy residues 28–48, 52–72, 102–122, 146–166, 169–189, 219–239, 241–261, and 275–295; these read PIGI…AGKG, LKTV…GCVI, ALAL…FTNA, YYPQ…AFTA, GDLP…TVGY, VIIL…GARF, LGAC…WEFW, and FLHN…DYAV.

The protein belongs to the UbiA prenyltransferase family. It depends on Mg(2+) as a cofactor.

Its subcellular location is the cell inner membrane. The enzyme catalyses all-trans-octaprenyl diphosphate + 4-hydroxybenzoate = 4-hydroxy-3-(all-trans-octaprenyl)benzoate + diphosphate. It participates in cofactor biosynthesis; ubiquinone biosynthesis. Functionally, catalyzes the prenylation of para-hydroxybenzoate (PHB) with an all-trans polyprenyl group. Mediates the second step in the final reaction sequence of ubiquinone-8 (UQ-8) biosynthesis, which is the condensation of the polyisoprenoid side chain with PHB, generating the first membrane-bound Q intermediate 3-octaprenyl-4-hydroxybenzoate. The chain is 4-hydroxybenzoate octaprenyltransferase from Pseudomonas savastanoi pv. phaseolicola (strain 1448A / Race 6) (Pseudomonas syringae pv. phaseolicola (strain 1448A / Race 6)).